We begin with the raw amino-acid sequence, 381 residues long: Adenylate cyclase (381 aa).

Positions 1 to 30 (MTVDDTGSGADGDGRVDPEPAPDSADPGED) are disordered. A Guanylate cyclase domain is found at 191 to 300 (AVGFADLVGF…TTVNLASRLT (110 aa)). Residues aspartate 196 and aspartate 240 each coordinate Mg(2+).

Belongs to the adenylyl cyclase class-3 family. Mg(2+) is required as a cofactor.

The catalysed reaction is ATP = 3',5'-cyclic AMP + diphosphate. This is Adenylate cyclase (cya) from Streptomyces coelicolor (strain ATCC BAA-471 / A3(2) / M145).